The chain runs to 89 residues: Small ribosomal subunit protein uS15 (89 aa).

This sequence belongs to the universal ribosomal protein uS15 family. As to quaternary structure, part of the 30S ribosomal subunit. Forms a bridge to the 50S subunit in the 70S ribosome, contacting the 23S rRNA.

Functionally, one of the primary rRNA binding proteins, it binds directly to 16S rRNA where it helps nucleate assembly of the platform of the 30S subunit by binding and bridging several RNA helices of the 16S rRNA. In terms of biological role, forms an intersubunit bridge (bridge B4) with the 23S rRNA of the 50S subunit in the ribosome. In Bartonella tribocorum (strain CIP 105476 / IBS 506), this protein is Small ribosomal subunit protein uS15.